The chain runs to 354 residues: Serum paraoxonase/lactonase 3 (354 aa).

Cys42 and Cys352 form a disulfide bridge. N-linked (GlcNAc...) asparagine glycosylation is present at Asn50. Residues Glu53 and Asp54 each coordinate Ca(2+). His114 (proton acceptor) is an active-site residue. Ile116 lines the Ca(2+) pocket. Ser165 carries the post-translational modification Phosphoserine. Ca(2+) contacts are provided by Asn167, Asn168, Asn223, Asp268, and Asn269. Residue Asn269 is glycosylated (N-linked (GlcNAc...) asparagine).

The protein belongs to the paraoxonase family. As to quaternary structure, homodimer. Ca(2+) is required as a cofactor. Post-translationally, glycosylated. In terms of processing, the signal sequence is not cleaved.

Its subcellular location is the secreted. The protein localises to the extracellular space. The enzyme catalyses a phenyl acetate + H2O = a phenol + acetate + H(+). It catalyses the reaction An aryl dialkyl phosphate + H2O = dialkyl phosphate + an aryl alcohol.. It carries out the reaction an N-acyl-L-homoserine lactone + H2O = an N-acyl-L-homoserine + H(+). Has low activity towards the organophosphate paraxon and aromatic carboxylic acid esters. Rapidly hydrolyzes lactones such as statin prodrugs (e.g. lovastatin). Hydrolyzes aromatic lactones and 5- or 6-member ring lactones with aliphatic substituents but not simple lactones or those with polar substituents. In Oryctolagus cuniculus (Rabbit), this protein is Serum paraoxonase/lactonase 3 (PON3).